We begin with the raw amino-acid sequence, 547 residues long: Chaperonin GroEL (547 aa).

Residues 30-33 (TLGP), Lys51, 87-91 (DGTTT), Gly415, and Asp495 contribute to the ATP site. The disordered stretch occupies residues 526–547 (KKESAGGGGMPGGMGGMGGMDF). Residues 530–547 (AGGGGMPGGMGGMGGMDF) show a composition bias toward gly residues.

The protein belongs to the chaperonin (HSP60) family. Forms a cylinder of 14 subunits composed of two heptameric rings stacked back-to-back. Interacts with the co-chaperonin GroES.

It localises to the cytoplasm. The catalysed reaction is ATP + H2O + a folded polypeptide = ADP + phosphate + an unfolded polypeptide.. Functionally, together with its co-chaperonin GroES, plays an essential role in assisting protein folding. The GroEL-GroES system forms a nano-cage that allows encapsulation of the non-native substrate proteins and provides a physical environment optimized to promote and accelerate protein folding. This is Chaperonin GroEL from Hyphomonas neptunium (strain ATCC 15444).